The sequence spans 256 residues: Triosephosphate isomerase (256 aa).

Substrate is bound at residue 12 to 14; that stretch reads NWK. Histidine 99 functions as the Electrophile in the catalytic mechanism. Glutamate 169 acts as the Proton acceptor in catalysis. Substrate-binding positions include glycine 175, serine 214, and 235–236; that span reads GG.

This sequence belongs to the triosephosphate isomerase family. As to quaternary structure, homodimer.

It localises to the cytoplasm. It catalyses the reaction D-glyceraldehyde 3-phosphate = dihydroxyacetone phosphate. It participates in carbohydrate biosynthesis; gluconeogenesis. The protein operates within carbohydrate degradation; glycolysis; D-glyceraldehyde 3-phosphate from glycerone phosphate: step 1/1. In terms of biological role, involved in the gluconeogenesis. Catalyzes stereospecifically the conversion of dihydroxyacetone phosphate (DHAP) to D-glyceraldehyde-3-phosphate (G3P). The polypeptide is Triosephosphate isomerase (Mesorhizobium japonicum (strain LMG 29417 / CECT 9101 / MAFF 303099) (Mesorhizobium loti (strain MAFF 303099))).